Consider the following 698-residue polypeptide: Quillaic acid 3-O-glycosyltransferase CSL1 (698 aa).

Residues 14–34 (ALLSRLHILFHSALVASVFYY) form a helical membrane-spanning segment. A glycan (N-linked (GlcNAc...) asparagine) is linked at Asn-38. The helical transmembrane segment at 42-62 (GPAWALMTFAELTLAFIWALT) threads the bilayer. Residues Lys-99 and Glu-100 each contribute to the UDP-alpha-D-glucose site. The active site involves Asp-129. Asn-317 is a glycosylation site (N-linked (GlcNAc...) asparagine). Residue Ser-436 is part of the active site. The next 6 membrane-spanning stretches (helical) occupy residues 478 to 498 (WTSG…YAMS), 508 to 528 (YAYF…GVVL), 546 to 566 (WLLA…YEVL), 581 to 601 (IWII…MLNK), 636 to 656 (MFMV…FGGL), and 669 to 689 (FAQL…MEEI).

The protein belongs to the glycosyltransferase 2 family. Plant cellulose synthase-like G subfamily. In terms of tissue distribution, mainly expressed in flowers and flower buds and, to a lesser extent, in leaves, stems and roots.

Its subcellular location is the golgi apparatus membrane. The protein operates within secondary metabolite biosynthesis; terpenoid biosynthesis. Its function is as follows. Component of the oleanane-type triterpene saponins (e.g. saponarioside A and saponarioside B) biosynthetic pathway, leading to the production of natural products with detergent properties used as traditional sources of soap. Glycosyltransferase that mediates the conversion of quillaic acid (QA) to QA-mono via the initiation of the C-3 sugar chain. This chain is Quillaic acid 3-O-glycosyltransferase CSL1, found in Saponaria officinalis (Common soapwort).